The chain runs to 382 residues: Gap junction alpha-1 protein (382 aa).

Residues G2–K23 lie on the Cytoplasmic side of the membrane. A Phosphoserine modification is found at S5. Residues V24–A44 traverse the membrane as a helical segment. Residues W45 to R76 lie on the Extracellular side of the membrane. Disulfide bonds link C54-C192 and C187-C198. The chain crosses the membrane as a helical span at residues F77–F97. Topologically, residues Y98–Y155 are cytoplasmic. K144 is covalently cross-linked (Glycyl lysine isopeptide (Lys-Gly) (interchain with G-Cter in SUMO)). A helical membrane pass occupies residues I156–I176. The Extracellular portion of the chain corresponds to Y177–T207. Residues I208–L228 form a helical membrane-spanning segment. The Cytoplasmic portion of the chain corresponds to F229–I382. Residue K237 forms a Glycyl lysine isopeptide (Lys-Gly) (interchain with G-Cter in SUMO) linkage. The interval S244 to I382 is interaction with NOV. A Phosphotyrosine modification is found at Y247. S255 and S262 each carry phosphoserine. An interaction with UBQLN4 region spans residues K264–I382. C271 carries the S-nitrosocysteine modification. Position 275 is a phosphothreonine (T275). The interval S279–N300 is disordered. Phosphoserine is present on residues S306 and S314. The segment covering Q317–A332 has biased composition (polar residues). Residues Q317–I382 form a disordered region. Position 325 is a phosphoserine; by CK1 (S325). Residue T326 is modified to Phosphothreonine. Residues S328 and S330 each carry the phosphoserine; by CK1 modification. A phosphoserine mark is found at S344 and S365. Over residues R362–R374 the composition is skewed to low complexity. A Phosphoserine; by PKC/PRKCG and PKC/PRKCD modification is found at S368. A phosphoserine mark is found at S369 and S373.

It belongs to the connexin family. Alpha-type (group II) subfamily. In terms of assembly, a connexon is composed of a hexamer of connexins. Interacts with SGSM3. Interacts with RIC1/CIP150. Interacts with CNST and CSNK1D. Interacts (via C-terminus) with TJP1. Interacts (via C-terminus) with SRC (via SH3 domain). Interacts (not ubiquitinated) with UBQLN4 (via UBA domain). Interacts with NOV. Interacts with TMEM65. Interacts with ANK3/ANKG and PKP2. In terms of processing, phosphorylation at Ser-325, Ser-328 and Ser-330 by CK1 modulates gap junction assembly. Phosphorylated at Ser-368 by PRKCG; phosphorylation induces disassembly of gap junction plaques and inhibition of gap junction activity. Phosphorylation at Ser-368 by PRKCD triggers its internalization into small vesicles leading to proteasome-mediated degradation. Sumoylated with SUMO1, SUMO2 and SUMO3, which may regulate the level of functional Cx43 gap junctions at the plasma membrane. May be desumoylated by SENP1 or SENP2. Post-translationally, S-nitrosylation at Cys-271 is enriched at the muscle endothelial gap junction in arteries, it augments channel permeability and may regulate of smooth muscle cell to endothelial cell communication. In terms of processing, acetylated in the developing cortex; leading to delocalization from the cell membrane.

Its subcellular location is the cell membrane. The protein resides in the cell junction. The protein localises to the gap junction. It is found in the endoplasmic reticulum. In terms of biological role, gap junction protein that acts as a regulator of bladder capacity. A gap junction consists of a cluster of closely packed pairs of transmembrane channels, the connexons, through which materials of low MW diffuse from one cell to a neighboring cell. May play a critical role in the physiology of hearing by participating in the recycling of potassium to the cochlear endolymph. Negative regulator of bladder functional capacity: acts by enhancing intercellular electrical and chemical transmission, thus sensitizing bladder muscles to cholinergic neural stimuli and causing them to contract. May play a role in cell growth inhibition through the regulation of NOV expression and localization. Plays an essential role in gap junction communication in the ventricles. The sequence is that of Gap junction alpha-1 protein (GJA1) from Macaca fascicularis (Crab-eating macaque).